We begin with the raw amino-acid sequence, 68 residues long: Alpha-conotoxin Lp1.1 (68 aa).

Residues 1–21 form the signal peptide; it reads MGMRMMFIMFMLVVLATTVVT. The propeptide occupies 22–48; that stretch reads FTSDRALDAMNAAASNKASRLIALAVR. Disulfide bonds link C50–C56 and C51–C64. Residues 52 to 54 form a lacks the Ser-Xaa-Pro motif that is crucial for potent interaction with nAChR region; sequence ARA. At G65 the chain carries Glycine amide. The propeptide occupies 66-68; that stretch reads GGR.

It belongs to the conotoxin A superfamily. Expressed by the venom duct.

The protein resides in the secreted. In terms of biological role, alpha-conotoxins act on postsynaptic membranes, they bind to the nicotinic acetylcholine receptors (nAChR) and thus inhibit them. Synthetic peptide inhibits alpha-6/alpha-3/beta-2 and alpha-3/beta-2 nicotinic acetylcholine receptors and causes uncoordinated movement when intramuscularly injected into goldfish. Has a distinct nAChR binding mode from other alpha-conotoxins, due to a different three residue motif (Ala-Xaa-Ala instead of the conserved Ser-Xaa-Pro motif). The sequence is that of Alpha-conotoxin Lp1.1 from Conus leopardus (Leopard cone).